The sequence spans 424 residues: 5,5'-dehydrodivanillate O-demethylase oxygenase subunit (424 aa).

Positions 27-135 constitute a Rieske domain; that stretch reads WHPIGGESEF…VRALGGLLWA (109 aa). The [2Fe-2S] cluster site is built by C68, H70, C87, and H90. Residues H181, H186, and D306 each contribute to the Fe cation site.

It belongs to the bacterial ring-hydroxylating dioxygenase alpha subunit family. As to quaternary structure, homotrimer. The three-component monooxygenase is composed of an oxygenase (LigXa), a ferredoxin (LigXc) and a ferredoxin reductase (LigXd). [2Fe-2S] cluster serves as cofactor. Requires Fe cation as cofactor.

It catalyses the reaction 5,5'-dehydrodivanillate + NADH + O2 + H(+) = 2,2',3-trihydroxy-3'-methoxy-5,5'-dicarboxybiphenyl + formaldehyde + NAD(+) + H2O. Functionally, involved in the catabolism of 5,5'-dehydrodivanillate (DDVA), an intermediate in the biodegradation of lignin. Part of a three-component monooxygenase that catalyzes the O-demethylation of DDVA, leading to the formation of 2,2',3-trihydroxy-3'-methoxy-5,5'-dicarboxybiphenyl (OH-DDVA). This is 5,5'-dehydrodivanillate O-demethylase oxygenase subunit from Sphingobium sp. (strain NBRC 103272 / SYK-6).